Reading from the N-terminus, the 386-residue chain is Leupaxin (386 aa).

Methionine 1 carries the post-translational modification N-acetylmethionine. The LD motif 1 signature appears at 3–15 (ELDALLEELERST). Positions 13–41 (RSTLQDSDEYSNPAPLPLDQHSRKETNLD) are disordered. Serine 19 bears the Phosphoserine mark. Tyrosine 22 carries the post-translational modification Phosphotyrosine. Position 54 is a phosphoserine (serine 54). Phosphotyrosine is present on tyrosine 62. 2 consecutive short sequence motifs (LD motif) follow at residues 70-82 (NVYS…KESP) and 92-103 (QLDELMAHLTEM). Position 72 is a phosphotyrosine; by LYN (tyrosine 72). Phosphoserine is present on serine 81. LIM zinc-binding domains lie at 150-208 (GHCA…QLFS), 209-267 (PRCA…AMFS), 268-326 (PKCG…HRRG), and 327-386 (TLCH…LFPL).

The protein belongs to the paxillin family. In terms of assembly, interacts with PTPN22. Interacts with unphosphorylated ITGA4. Interacts with PTK2B/PYK2, PTPN12, AR and SRF. Interacts (via LD motif 3) with LYN and the interaction is induced upon B-cell antigen receptor (BCR) activation. Interacts (via LD motif 3) with PTK2/FAK. Phosphorylated on tyrosine residues. Phosphorylation on Tyr-72 is important for its inhibitory function. Bombesin stimulates phosphorylation on Tyr-22, Tyr-62 and Tyr-72. In terms of tissue distribution, macrophages, monocytes and osteoclasts (at protein level). Strongly expressed in cells and tissues of hematopoietic origin. Highest expression in lymphoid tissues such as spleen, lymph node, thymus and appendix and in the vascular smooth muscle. Lower levels in bone marrow and fetal liver. Also expressed in peripheral blood lymphocytes and a number of hematopoietic cell lines. Very low levels found in epithelial cell lines. Expressed in prostate cancer (PCa) cells and its expression intensity is directly linked to PCa progression.

It localises to the cytoplasm. The protein localises to the cell junction. The protein resides in the focal adhesion. Its subcellular location is the nucleus. It is found in the perinuclear region. It localises to the cell projection. The protein localises to the podosome. The protein resides in the cell membrane. Its function is as follows. Transcriptional coactivator for androgen receptor (AR) and serum response factor (SRF). Contributes to the regulation of cell adhesion, spreading and cell migration and acts as a negative regulator in integrin-mediated cell adhesion events. Suppresses the integrin-induced tyrosine phosphorylation of paxillin (PXN). May play a critical role as an adapter protein in the formation of the adhesion zone in osteoclasts. Negatively regulates B-cell antigen receptor (BCR) signaling. The polypeptide is Leupaxin (LPXN) (Homo sapiens (Human)).